The following is a 143-amino-acid chain: Large ribosomal subunit protein uL11 (143 aa).

The protein belongs to the universal ribosomal protein uL11 family. In terms of assembly, part of the ribosomal stalk of the 50S ribosomal subunit. Interacts with L10 and the large rRNA to form the base of the stalk. L10 forms an elongated spine to which L12 dimers bind in a sequential fashion forming a multimeric L10(L12)X complex. One or more lysine residues are methylated.

Functionally, forms part of the ribosomal stalk which helps the ribosome interact with GTP-bound translation factors. The polypeptide is Large ribosomal subunit protein uL11 (Janthinobacterium sp. (strain Marseille) (Minibacterium massiliensis)).